A 192-amino-acid polypeptide reads, in one-letter code: Phosphomevalonate kinase (192 aa).

ATP contacts are provided by residues 17-23 (KRKSGKD) and arginine 141. Asparagine 170 serves as a coordination point for substrate. Residues histidine 171 and glutamine 180 each contribute to the ATP site.

Monomer.

It is found in the cytoplasm. The protein resides in the cytosol. The enzyme catalyses (R)-5-phosphomevalonate + ATP = (R)-5-diphosphomevalonate + ADP. It participates in isoprenoid biosynthesis; isopentenyl diphosphate biosynthesis via mevalonate pathway; isopentenyl diphosphate from (R)-mevalonate: step 2/3. Its function is as follows. Catalyzes the reversible ATP-dependent phosphorylation of mevalonate 5-phosphate to produce mevalonate diphosphate and ADP, a key step in the mevalonic acid mediated biosynthesis of isopentenyl diphosphate and other polyisoprenoid metabolites. This chain is Phosphomevalonate kinase (Pmvk), found in Mus musculus (Mouse).